The chain runs to 645 residues: Chaperone protein DnaK (645 aa).

Position 201 is a phosphothreonine; by autocatalysis (threonine 201). A compositionally biased stretch (low complexity) spans 606–629 (NTNNATAGDNNTTDTGSSSNSDGS). A disordered region spans residues 606–645 (NTNNATAGDNNTTDTGSSSNSDGSKVVDSDYQEIDKKDGK). Over residues 630-645 (KVVDSDYQEIDKKDGK) the composition is skewed to basic and acidic residues.

The protein belongs to the heat shock protein 70 family.

In terms of biological role, acts as a chaperone. The protein is Chaperone protein DnaK of Ehrlichia ruminantium (strain Gardel).